The following is a 427-amino-acid chain: Kallistatin (427 aa).

Positions 1-20 (MHLIDYLLLLLVGLLALSHG) are cleaved as a signal peptide. 4 N-linked (GlcNAc...) asparagine glycosylation sites follow: asparagine 33, asparagine 108, asparagine 157, and asparagine 238.

It belongs to the serpin family. Monomer and some homodimers.

The protein localises to the secreted. Functionally, inhibits human amidolytic and kininogenase activities of tissue kallikrein. The protein is Kallistatin (SERPINA4) of Pongo abelii (Sumatran orangutan).